The following is a 614-amino-acid chain: Vitamin B12 transporter BtuB (614 aa).

The signal sequence occupies residues 1–20 (MIKKASLLTACSVTAFSAWA). Positions 26–33 (DTLVVTAN) match the TonB box motif. The region spanning 38–152 (PRSTVLAPTT…IGGVVNIITT (115 aa)) is the TBDR plug domain. Cyanocob(III)alamin-binding positions include Leu83, Ser85, Asn92, and 110–111 (VS). A TBDR beta-barrel domain is found at 155–614 (EPGTEISAGW…EYTLSGSYTF (460 aa)). The next 3 beta stranded transmembrane spans lie at 158–165 (TEISAGWG), 169–178 (YQNYDVSTQQ), and 184–195 (TRVTLLGDYAHT). Asp199, Gln211, Asp213, and Asp215 together coordinate Ca(2+). Transmembrane regions (beta stranded) follow at residues 217–227 (FLSKTLYGALE) and 232–248 (DAWSGFVRGYGYDNRTN). Residues Tyr249 and Asp250 each coordinate Ca(2+). Ala251 contributes to the cyanocob(III)alamin binding site. Asp261 contributes to the Ca(2+) binding site. The next 14 beta stranded transmembrane spans lie at 263–277 (RKLYSQSWDAGLRYN), 279–296 (ELIKSQLITSYSHSKDYN), 309–325 (TLDEMKQYTVQWANNVI), 328–337 (HGSIGAGVDW), 353–369 (YDQRNTGIYLTGLQQVG), 371–381 (FTFEGAARSDD), 385–400 (FGRHGTWQTSAGWEFI), 403–417 (YRFIASYGTSYKAPN), 434–443 (KSKQWEGAFE), 449–458 (VNWRISGYRN), 473–490 (YYNEGKARIKGVEATANF), 494–509 (PLTHTVSYDYVDARNA), 517–529 (RRAKQQVKYQLDW), and 535–550 (DWGITYQYLGTRYDKD). Thr309 is a binding site for cyanocob(III)alamin. Residue Arg517 participates in cyanocob(III)alamin binding. Residue Tyr551 participates in cyanocob(III)alamin binding. The next 3 beta stranded transmembrane spans lie at 558–572 (TVKMGGVSLWDLAVA), 585–596 (IANLFDKDYETV), and 602–614 (AGREYTLSGSYTF). The short motif at 597 to 614 (YGYQTAGREYTLSGSYTF) is the TonB C-terminal box element.

This sequence belongs to the TonB-dependent receptor family. BtuB (TC 1.B.14.3.1) subfamily.

Its subcellular location is the cell outer membrane. Functionally, involved in the active translocation of vitamin B12 (cyanocobalamin) across the outer membrane to the periplasmic space. It derives its energy for transport by interacting with the trans-periplasmic membrane protein TonB. The chain is Vitamin B12 transporter BtuB from Escherichia coli O9:H4 (strain HS).